Consider the following 66-residue polypeptide: DNA gyrase inhibitor YacG (66 aa).

Zn(2+) is bound by residues Cys-10, Cys-13, Cys-29, and Cys-33. The tract at residues 46–66 (KRIPSDVQITDSDEWSDETRY) is disordered. Residues 56–66 (DSDEWSDETRY) show a composition bias toward acidic residues.

It belongs to the DNA gyrase inhibitor YacG family. As to quaternary structure, interacts with GyrB. It depends on Zn(2+) as a cofactor.

Its function is as follows. Inhibits all the catalytic activities of DNA gyrase by preventing its interaction with DNA. Acts by binding directly to the C-terminal domain of GyrB, which probably disrupts DNA binding by the gyrase. The sequence is that of DNA gyrase inhibitor YacG from Sodalis glossinidius (strain morsitans).